The primary structure comprises 452 residues: Glycine receptor subunit alpha-2 (452 aa).

An N-terminal signal peptide occupies residues 1–27 (MNRQLVNILTALFAFFLGTNHFREAFC). The Extracellular segment spans residues 28–256 (KDHDSRSGKH…KFHLERQMGY (229 aa)). N-linked (GlcNAc...) asparagine glycosylation occurs at N72. R99 is a binding site for glycine. R99 contributes to the strychnine binding site. Residue N103 is glycosylated (N-linked (GlcNAc...) asparagine). Position 163 (S163) interacts with glycine. C172 and C186 are oxidised to a cystine. E226 and E228 together coordinate Zn(2+). A disulfide bridge links C232 with C243. T238 lines the glycine pocket. H249 provides a ligand contact to Zn(2+). A helical transmembrane segment spans residues 257 to 278 (YLIQMYIPSLLIVILSWVSFWI). Topologically, residues 279–283 (NMDAA) are cytoplasmic. The helical transmembrane segment at 284–304 (PARVALGITTVLTMTTQSSGS) threads the bilayer. The Extracellular segment spans residues 305-315 (RASLPKVSYVK). Residues 316–336 (AIDIWMAVCLLFVFAALLEYA) traverse the membrane as a helical segment. Topologically, residues 337–420 (AVNFVSRQHK…FVDRAKRIDT (84 aa)) are cytoplasmic. Residues 421 to 441 (ISRAAFPLAFLIFNIFYWITY) traverse the membrane as a helical segment. Residues 442-452 (KIIRHEDVHKK) are Extracellular-facing.

Belongs to the ligand-gated ion channel (TC 1.A.9) family. Glycine receptor (TC 1.A.9.3) subfamily. GLRA2 sub-subfamily. Interacts with GLRB. Heteropentamer composed of GLRA2 and GLRB; functional GLRB-GLRA2 heteropentamers contain four GLRA2 subunits and one GLRB subunit, although alternative subunit composition cannot be excluded. Homopentamer (in vitro). Both homopentamers and heteropentamers form functional ion channels, but their characteristics are subtly different.

It is found in the postsynaptic cell membrane. The protein localises to the synapse. Its subcellular location is the cell membrane. The protein resides in the cell projection. It carries out the reaction chloride(in) = chloride(out). With respect to regulation, channel opening is triggered by extracellular glycine. Channel opening is also triggered by taurine and beta-alanine. Inhibited by strychnine. Inhibited by picrotoxin. Its function is as follows. Subunit of heteromeric glycine-gated chloride channels. Plays a role in synaptic plasticity. Contributes to the generation of inhibitory postsynaptic currents, and is involved in the down-regulation of neuronal excitability. Plays a role in cellular responses to ethanol. The sequence is that of Glycine receptor subunit alpha-2 from Rattus norvegicus (Rat).